The following is a 220-amino-acid chain: Glycerol-3-phosphate acyltransferase (220 aa).

Helical transmembrane passes span 11–31, 70–90, 96–116, 127–147, 153–173, and 192–212; these read INVIFTLLGYLIGGIPFGYAL, LLVLILDLFKGMFAVFLSKLF, LQWMVAIASILGHCYSPFLNF, GSVVLLIPIESLIGLTVWFFV, ISSLASILGVGTATVLIFFVP, and PMVLIFIFTLIKHAGNIFNLL.

The protein belongs to the PlsY family. As to quaternary structure, probably interacts with PlsX.

The protein resides in the cell inner membrane. The catalysed reaction is an acyl phosphate + sn-glycerol 3-phosphate = a 1-acyl-sn-glycero-3-phosphate + phosphate. The protein operates within lipid metabolism; phospholipid metabolism. Functionally, catalyzes the transfer of an acyl group from acyl-phosphate (acyl-PO(4)) to glycerol-3-phosphate (G3P) to form lysophosphatidic acid (LPA). This enzyme utilizes acyl-phosphate as fatty acyl donor, but not acyl-CoA or acyl-ACP. The protein is Glycerol-3-phosphate acyltransferase of Helicobacter pylori (strain J99 / ATCC 700824) (Campylobacter pylori J99).